A 198-amino-acid chain; its full sequence is Molybdenum cofactor guanylyltransferase (198 aa).

Residues 14 to 16 (LAG), Lys27, Asp73, and Asp103 contribute to the GTP site. Asp103 lines the Mg(2+) pocket.

Belongs to the MobA family. As to quaternary structure, monomer. Mg(2+) serves as cofactor.

The protein resides in the cytoplasm. It carries out the reaction Mo-molybdopterin + GTP + H(+) = Mo-molybdopterin guanine dinucleotide + diphosphate. In terms of biological role, transfers a GMP moiety from GTP to Mo-molybdopterin (Mo-MPT) cofactor (Moco or molybdenum cofactor) to form Mo-molybdopterin guanine dinucleotide (Mo-MGD) cofactor. In Pseudomonas aeruginosa (strain LESB58), this protein is Molybdenum cofactor guanylyltransferase.